Consider the following 489-residue polypeptide: Palmitoyltransferase ZDHHC14 (489 aa).

Over 1–60 (MPPGGGGPMKDCEYSQISTHSSSPMESPHKKKKIAARRKWEVFPGRNKFFCNGRIMMARQ) the chain is Cytoplasmic. The helical transmembrane segment at 61-81 (TGVFYLTLILILVTSGLFFAF) threads the bilayer. The Lumenal segment spans residues 82–89 (DCRYLAEK). Residues 90 to 110 (ITPAIPVVGGILFFFVMGTLL) traverse the membrane as a helical segment. The Cytoplasmic segment spans residues 111–208 (RTSFSDPGVL…GNCVGKRNYR (98 aa)). The DHHC domain occupies 165 to 215 (KYCFTCKIFRPPRASHCSLCDNCVEQFDHHCPWVGNCVGKRNYRFFYMFIL). The S-palmitoyl cysteine intermediate role is filled by Cys195. The helical transmembrane segment at 209-229 (FFYMFILSLSFLTVFIFAFVI) threads the bilayer. The Lumenal segment spans residues 230 to 255 (THVIHRSQQKGFLDALKDSPASVLEA). The chain crosses the membrane as a helical span at residues 256 to 276 (VICFFSVWSIIGLSGFHTYLI). The Cytoplasmic segment spans residues 277-489 (SSNQTTNEDI…VRGLVKLSSV (213 aa)). A disordered region spans residues 434–454 (HGGHQFLTPDEAPSPPRMLGA). Residue Ser456 is modified to Phosphoserine.

It belongs to the DHHC palmitoyltransferase family. ERF2/ZDHHC9 subfamily.

It localises to the endoplasmic reticulum membrane. Its subcellular location is the golgi apparatus membrane. The enzyme catalyses L-cysteinyl-[protein] + hexadecanoyl-CoA = S-hexadecanoyl-L-cysteinyl-[protein] + CoA. Functionally, palmitoyltransferase that could catalyze the addition of palmitate onto various protein substrates. May have a palmitoyltransferase activity toward the beta-2 adrenergic receptor/ADRB2 and thereby regulate G protein-coupled receptor signaling. May play a role in cell differentiation and apoptosis. This Mus musculus (Mouse) protein is Palmitoyltransferase ZDHHC14.